A 554-amino-acid polypeptide reads, in one-letter code: Hydroxylamine reductase (554 aa).

Residues cysteine 3, cysteine 6, cysteine 18, and cysteine 25 each contribute to the [2Fe-2S] cluster site. Positions 252, 276, 320, 408, 436, 461, 495, and 497 each coordinate hybrid [4Fe-2O-2S] cluster. A Cysteine persulfide modification is found at cysteine 408.

Belongs to the HCP family. Requires [2Fe-2S] cluster as cofactor. It depends on hybrid [4Fe-2O-2S] cluster as a cofactor.

The protein localises to the cytoplasm. The catalysed reaction is A + NH4(+) + H2O = hydroxylamine + AH2 + H(+). Functionally, catalyzes the reduction of hydroxylamine to form NH(3) and H(2)O. This is Hydroxylamine reductase from Shewanella baltica (strain OS185).